A 179-amino-acid chain; its full sequence is Large ribosomal subunit protein uL5 (179 aa).

It belongs to the universal ribosomal protein uL5 family. In terms of assembly, part of the 50S ribosomal subunit; part of the 5S rRNA/L5/L18/L25 subcomplex. Contacts the 5S rRNA and the P site tRNA. Forms a bridge to the 30S subunit in the 70S ribosome.

In terms of biological role, this is one of the proteins that bind and probably mediate the attachment of the 5S RNA into the large ribosomal subunit, where it forms part of the central protuberance. In the 70S ribosome it contacts protein S13 of the 30S subunit (bridge B1b), connecting the 2 subunits; this bridge is implicated in subunit movement. Contacts the P site tRNA; the 5S rRNA and some of its associated proteins might help stabilize positioning of ribosome-bound tRNAs. The sequence is that of Large ribosomal subunit protein uL5 from Prochlorococcus marinus (strain NATL2A).